The following is a 245-amino-acid chain: Mitochondrial import inner membrane translocase subunit Tim21 (245 aa).

A mitochondrion-targeting transit peptide spans 1-18; the sequence is MICAFLRVVRHAEKLHGS. The disordered stretch occupies residues 64 to 97; that stretch reads FWTQGPDPRKAKEDSSKQVSINRNQREETGVSTS. Over residues 70-79 the composition is skewed to basic and acidic residues; it reads DPRKAKEDSS. The helical transmembrane segment at 108 to 128 threads the bilayer; it reads TYLIVVLFGVSITGSLLYTIF.

This sequence belongs to the TIM21 family. Component of the TIM23 complex. Component of the MITRAC (mitochondrial translation regulation assembly intermediate of cytochrome c oxidase complex) complex, the core components of this complex being COA3/MITRAC12 and COX14. Interacts with COA3 and MT-CO1/COX1.

It is found in the mitochondrion membrane. Its function is as follows. Participates in the translocation of transit peptide-containing proteins across the mitochondrial inner membrane. Also required for assembly of mitochondrial respiratory chain complex I and complex IV as component of the MITRAC (mitochondrial translation regulation assembly intermediate of cytochrome c oxidase complex) complex. Probably shuttles between the presequence translocase and respiratory-chain assembly intermediates in a process that promotes incorporation of early nuclear-encoded subunits into these complexes. This Rattus norvegicus (Rat) protein is Mitochondrial import inner membrane translocase subunit Tim21 (Timm21).